The sequence spans 216 residues: Large ribosomal subunit protein uL24m (216 aa).

The transit peptide at 1–9 (MRLTLLLEM) directs the protein to the mitochondrion. The KOW domain occupies 56-89 (YFRGDTVEVLHGKDAGKQGKVTQVVRARNWVVVD).

The protein belongs to the universal ribosomal protein uL24 family. Component of the mitochondrial ribosome large subunit (39S) which comprises a 16S rRNA and about 50 distinct proteins. Ubiquitous. Expressed at greater levels in the kidney, adipose tissue, muscle and liver than the brain, heart, ovary and lung.

Its subcellular location is the mitochondrion. This Xenopus laevis (African clawed frog) protein is Large ribosomal subunit protein uL24m (mrpl24).